Consider the following 500-residue polypeptide: Cytochrome P450 2D26 (500 aa).

Ser249 is modified (phosphoserine). Cys446 is a binding site for heme.

This sequence belongs to the cytochrome P450 family. It depends on heme as a cofactor.

It localises to the endoplasmic reticulum membrane. The protein localises to the microsome membrane. The catalysed reaction is an organic molecule + reduced [NADPH--hemoprotein reductase] + O2 = an alcohol + oxidized [NADPH--hemoprotein reductase] + H2O + H(+). Functionally, cytochromes P450 are a group of heme-thiolate monooxygenases. In liver microsomes, this enzyme is involved in an NADPH-dependent electron transport pathway. It oxidizes a variety of structurally unrelated compounds, including steroids, fatty acids, and xenobiotics. The protein is Cytochrome P450 2D26 of Mus musculus (Mouse).